The primary structure comprises 793 residues: Phenylalanine--tRNA ligase beta subunit (793 aa).

The region spanning 39-148 (AGQFTHVIVA…DEAPIGMDLR (110 aa)) is the tRNA-binding domain. In terms of domain architecture, B5 spans 401-477 (PGTVSFLFDT…RLYGYDKLQA (77 aa)). Mg(2+) contacts are provided by aspartate 455, aspartate 461, glutamate 464, and glutamate 465. An FDX-ACB domain is found at 698-792 (SKYPQIRRDL…LENEFSILLR (95 aa)).

It belongs to the phenylalanyl-tRNA synthetase beta subunit family. Type 1 subfamily. Tetramer of two alpha and two beta subunits. Mg(2+) serves as cofactor.

It localises to the cytoplasm. It catalyses the reaction tRNA(Phe) + L-phenylalanine + ATP = L-phenylalanyl-tRNA(Phe) + AMP + diphosphate + H(+). In Legionella pneumophila (strain Paris), this protein is Phenylalanine--tRNA ligase beta subunit.